Here is a 314-residue protein sequence, read N- to C-terminus: Protein translocase subunit SecF (314 aa).

6 helical membrane passes run Ala17–Leu37, Gln137–Tyr157, Glu158–Gly178, Ser188–Phe210, Thr250–Phe270, and Leu272–Val292.

It belongs to the SecD/SecF family. SecF subfamily. In terms of assembly, forms a complex with SecD. Part of the essential Sec protein translocation apparatus which comprises SecA, SecYEG and auxiliary proteins SecDF. Other proteins may also be involved.

Its subcellular location is the cell inner membrane. In terms of biological role, part of the Sec protein translocase complex. Interacts with the SecYEG preprotein conducting channel. SecDF uses the proton motive force (PMF) to complete protein translocation after the ATP-dependent function of SecA. This chain is Protein translocase subunit SecF, found in Desulfurispirillum indicum (strain ATCC BAA-1389 / DSM 22839 / S5).